Here is a 264-residue protein sequence, read N- to C-terminus: Thymidylate synthase (264 aa).

Arg-21 serves as a coordination point for dUMP. His-51 is a binding site for (6R)-5,10-methylene-5,6,7,8-tetrahydrofolate. Residue 126–127 (RR) coordinates dUMP. The active-site Nucleophile is Cys-146. DUMP contacts are provided by residues 166-169 (RSCD), Asn-177, and 207-209 (HLY). Asp-169 lines the (6R)-5,10-methylene-5,6,7,8-tetrahydrofolate pocket. Residue Ala-263 participates in (6R)-5,10-methylene-5,6,7,8-tetrahydrofolate binding.

It belongs to the thymidylate synthase family. Bacterial-type ThyA subfamily. As to quaternary structure, homodimer.

The protein resides in the cytoplasm. It catalyses the reaction dUMP + (6R)-5,10-methylene-5,6,7,8-tetrahydrofolate = 7,8-dihydrofolate + dTMP. The protein operates within pyrimidine metabolism; dTTP biosynthesis. Catalyzes the reductive methylation of 2'-deoxyuridine-5'-monophosphate (dUMP) to 2'-deoxythymidine-5'-monophosphate (dTMP) while utilizing 5,10-methylenetetrahydrofolate (mTHF) as the methyl donor and reductant in the reaction, yielding dihydrofolate (DHF) as a by-product. This enzymatic reaction provides an intracellular de novo source of dTMP, an essential precursor for DNA biosynthesis. The protein is Thymidylate synthase of Escherichia fergusonii (strain ATCC 35469 / DSM 13698 / CCUG 18766 / IAM 14443 / JCM 21226 / LMG 7866 / NBRC 102419 / NCTC 12128 / CDC 0568-73).